The primary structure comprises 404 residues: Cysteine desulfurase IscS (404 aa).

Pyridoxal 5'-phosphate-binding positions include 73 to 74, Asn-153, Gln-181, and 201 to 203; these read AT and SAH. Residue Lys-204 is modified to N6-(pyridoxal phosphate)lysine. A pyridoxal 5'-phosphate-binding site is contributed by Thr-241. Catalysis depends on Cys-327, which acts as the Cysteine persulfide intermediate. A [2Fe-2S] cluster-binding site is contributed by Cys-327.

Belongs to the class-V pyridoxal-phosphate-dependent aminotransferase family. NifS/IscS subfamily. In terms of assembly, homodimer. Forms a heterotetramer with IscU, interacts with other sulfur acceptors. Requires pyridoxal 5'-phosphate as cofactor.

It localises to the cytoplasm. The enzyme catalyses (sulfur carrier)-H + L-cysteine = (sulfur carrier)-SH + L-alanine. Its pathway is cofactor biosynthesis; iron-sulfur cluster biosynthesis. Functionally, master enzyme that delivers sulfur to a number of partners involved in Fe-S cluster assembly, tRNA modification or cofactor biosynthesis. Catalyzes the removal of elemental sulfur atoms from cysteine to produce alanine. Functions as a sulfur delivery protein for Fe-S cluster synthesis onto IscU, an Fe-S scaffold assembly protein, as well as other S acceptor proteins. This chain is Cysteine desulfurase IscS, found in Anaeromyxobacter sp. (strain Fw109-5).